An 86-amino-acid polypeptide reads, in one-letter code: MDRNQRKVYQGRVVSDKMDKTITVLVETYKKDRLYGKRVKYSKKFKAHDEQNTAKVGDIVRIMETRPLSKDKRFRLVEIVEEAIII.

The protein belongs to the universal ribosomal protein uS17 family. As to quaternary structure, part of the 30S ribosomal subunit.

One of the primary rRNA binding proteins, it binds specifically to the 5'-end of 16S ribosomal RNA. The sequence is that of Small ribosomal subunit protein uS17 from Shouchella clausii (strain KSM-K16) (Alkalihalobacillus clausii).